The sequence spans 81 residues: Acyl carrier protein (81 aa).

Residues 2 to 80 form the Carrier domain; that stretch reads ASKDEILAGL…DAVNFIDNAQ (79 aa). O-(pantetheine 4'-phosphoryl)serine is present on serine 40.

This sequence belongs to the acyl carrier protein (ACP) family. Post-translationally, 4'-phosphopantetheine is transferred from CoA to a specific serine of apo-ACP by AcpS. This modification is essential for activity because fatty acids are bound in thioester linkage to the sulfhydryl of the prosthetic group.

It localises to the cytoplasm. Its pathway is lipid metabolism; fatty acid biosynthesis. Its function is as follows. Carrier of the growing fatty acid chain in fatty acid biosynthesis. The sequence is that of Acyl carrier protein from Kocuria rhizophila (strain ATCC 9341 / DSM 348 / NBRC 103217 / DC2201).